A 354-amino-acid polypeptide reads, in one-letter code: MQLTPRSVHLVHLLLAATTLISPSWSNHQSQQPALQALSPDDTLFAHLRCFELFASGQQSRDRDADAADWLGGNRERYLHRVERTPAFVKCVLGRMHFYDSSERRFNVNILRTQYNAYKQWMTLSEEDVDDFIHEVSNIGALNSSNDAEVYDALKLLFTNHSVSFFQLFLRDPTVLQNMYDDKSLSVRKPNQTVVQFCELQMAAELWDDICLIRAYQISNHTEAMERHIACIFRGFQYLDANSSIDVKEIVRDYELTETLDEASKNSIEECARNASEKDDIPKRSLAMYSCLLDGSHSEVFKKAFDFREVRSGNLTFLVQNLPYDRDQVRQQILALDKEHCNDQQPLAGRFIED.

A signal peptide spans 1 to 26; that stretch reads MQLTPRSVHLVHLLLAATTLISPSWS.

Belongs to the PBP/GOBP family.

It localises to the secreted. Functionally, modulates blood feeding of female mosquitoes on vertebrate species by binding and sequestering different mediators involved in the host response. Binds serotonin with high affinity. Binds weakly noradrenaline and histamine. Does not bind tryptamine, octopamine, dopamine, adrenaline, leukotriene C4, leukotriene D4, leukotriene B4, ADP and U-46619, a stable analog of thromboxane A2. Inhibits agonist-induced platelet aggregation. Exhibits vasodilating activity. The polypeptide is Long form salivary protein D7L3 (Anopheles gambiae (African malaria mosquito)).